An 819-amino-acid polypeptide reads, in one-letter code: THO complex subunit 5B (819 aa).

The tract at residues 285–332 (ARQQSRKDSGMSSNTESSRLEDDGPDDDDDGQRRRKRPKKLTSKEGSD) is disordered.

Belongs to the THOC5 family. In terms of assembly, component of the THO complex, which is composed of THO1, THO2, THO3, THO5, THO6 and THO7.

It is found in the nucleus. Its function is as follows. Acts as a component of the THO subcomplex of the TREX complex which is thought to couple mRNA transcription, processing and nuclear export. In Arabidopsis thaliana (Mouse-ear cress), this protein is THO complex subunit 5B (THO5B).